A 229-amino-acid chain; its full sequence is MSIALLDIEGTVCPITFVKDCLFPYFSKQYPSYLRDVSFPIDKSDGGLADVLAGFPKEAVASIDQLKNHIDDLVARDVKDPVLKSFQGLVWKEGYAKGDLKAPVYEDAIAFINRSKSVYIYSSGSVGAQKLLFSHVDVNGASVDLTPKLKGYFDITTAGFKQEKDSYLKIAADIGCDPADVIFYSDNVLEVKAALEAGMASKVVVRPGNAELSESDKKSYECISSFTAE.

Residues D7 and E9 each coordinate Mg(2+). Substrate is bound by residues 122–123 (SS) and K161. D186 contacts Mg(2+).

The protein belongs to the HAD-like hydrolase superfamily. MasA/MtnC family. In terms of assembly, monomer. Mg(2+) serves as cofactor.

The protein resides in the cytoplasm. Its subcellular location is the nucleus. The enzyme catalyses 5-methylsulfanyl-2,3-dioxopentyl phosphate + H2O = 1,2-dihydroxy-5-(methylsulfanyl)pent-1-en-3-one + phosphate. The protein operates within amino-acid biosynthesis; L-methionine biosynthesis via salvage pathway; L-methionine from S-methyl-5-thio-alpha-D-ribose 1-phosphate: step 3/6. It functions in the pathway amino-acid biosynthesis; L-methionine biosynthesis via salvage pathway; L-methionine from S-methyl-5-thio-alpha-D-ribose 1-phosphate: step 4/6. Its function is as follows. Bifunctional enzyme that catalyzes the enolization of 2,3-diketo-5-methylthiopentyl-1-phosphate (DK-MTP-1-P) into the intermediate 2-hydroxy-3-keto-5-methylthiopentenyl-1-phosphate (HK-MTPenyl-1-P), which is then dephosphorylated to form the acireductone 1,2-dihydroxy-3-keto-5-methylthiopentene (DHK-MTPene). This Clavispora lusitaniae (strain ATCC 42720) (Yeast) protein is Enolase-phosphatase E1.